The primary structure comprises 139 residues: uncharacterized protein (139 aa).

Residues 8-63 enclose the HTH cro/C1-type domain; that stretch reads LRELRRARKLTVNQLAVYSGISSATISKIENGKRGTPKPATIKKLAAVLKVPYENL. The segment at residues 19-38 is a DNA-binding region (H-T-H motif); the sequence is VNQLAVYSGISSATISKIEN.

This is an uncharacterized protein from Bacillus subtilis (strain 168).